Consider the following 404-residue polypeptide: Proteasomal ubiquitin receptor ADRM1-B (404 aa).

A Pru domain is found at 17–130 (SSSKYLVEFR…RKVNEYLNNP (114 aa)). 3 disordered regions span residues 128–149 (NNPP…LSAL), 195–258 (GSGG…TSPT), and 376–404 (FAKA…MSLD). Over residues 195–247 (GSGGPTTSSSSSSSRSQSAAVTPSSTTSSTRTTSAPVAPAAAPATTPSPAVSS) the composition is skewed to low complexity. A compositionally biased stretch (polar residues) spans 248 to 258 (NDGASAATSPT). A DEUBAD domain is found at 278–390 (TGEGGQQVDL…QSTSSQKERE (113 aa)). The segment covering 386-395 (QKERESSEKK) has biased composition (basic and acidic residues).

Belongs to the ADRM1 family. Component of the 19S proteasome regulatory particle complex. The 26S proteasome consists of a 20S core particle (CP) and two 19S regulatory subunits (RP).

It localises to the cytoplasm. The protein localises to the nucleus. In terms of biological role, component of the 26S proteasome, a multiprotein complex involved in the ATP-dependent degradation of ubiquitinated proteins. This complex plays a key role in the maintenance of protein homeostasis by removing misfolded or damaged proteins, which could impair cellular functions, and by removing proteins whose functions are no longer required. Therefore, the proteasome participates in numerous cellular processes, including cell cycle progression, apoptosis, or DNA damage repair. Within the complex, functions as a proteasomal ubiquitin receptor. This chain is Proteasomal ubiquitin receptor ADRM1-B (adrm1-b), found in Xenopus laevis (African clawed frog).